A 45-amino-acid chain; its full sequence is Cytochrome b559 subunit beta (45 aa).

The chain crosses the membrane as a helical span at residues 20–36; the sequence is WLAVHTLAVPTVFFLGA. Histidine 24 serves as a coordination point for heme.

The protein belongs to the PsbE/PsbF family. Heterodimer of an alpha subunit and a beta subunit. PSII is composed of 1 copy each of membrane proteins PsbA, PsbB, PsbC, PsbD, PsbE, PsbF, PsbH, PsbI, PsbJ, PsbK, PsbL, PsbM, PsbT, PsbX, PsbY, PsbZ, Psb30/Ycf12, peripheral proteins PsbO, CyanoQ (PsbQ), PsbU, PsbV and a large number of cofactors. It forms dimeric complexes. It depends on heme b as a cofactor.

The protein localises to the cellular thylakoid membrane. This b-type cytochrome is tightly associated with the reaction center of photosystem II (PSII). PSII is a light-driven water:plastoquinone oxidoreductase that uses light energy to abstract electrons from H(2)O, generating O(2) and a proton gradient subsequently used for ATP formation. It consists of a core antenna complex that captures photons, and an electron transfer chain that converts photonic excitation into a charge separation. The polypeptide is Cytochrome b559 subunit beta (Trichormus variabilis (strain ATCC 29413 / PCC 7937) (Anabaena variabilis)).